Reading from the N-terminus, the 494-residue chain is NADPH:adrenodoxin oxidoreductase, mitochondrial (494 aa).

Residues M1–F34 constitute a mitochondrion transit peptide. Positions 51, 72, 80, and 116 each coordinate FAD. Residues Q187 to V190, R231 to R232, and E243 each bind NADP(+). Position 313 is a phosphoserine (S313). FAD is bound by residues W401 and G408–I410. Residue G408 participates in NADP(+) binding.

This sequence belongs to the ferredoxin--NADP reductase type 1 family. In terms of assembly, monomer. Interacts directly with FDX1. It depends on FAD as a cofactor.

The protein resides in the mitochondrion inner membrane. It catalyses the reaction 2 reduced [adrenodoxin] + NADP(+) + H(+) = 2 oxidized [adrenodoxin] + NADPH. It carries out the reaction 2 reduced [2Fe-2S]-[ferredoxin] + NADP(+) + H(+) = 2 oxidized [2Fe-2S]-[ferredoxin] + NADPH. It functions in the pathway steroid metabolism; cholesterol metabolism. Serves as the first electron transfer protein in all the mitochondrial P450 systems including cholesterol side chain cleavage in all steroidogenic tissues, steroid 11-beta hydroxylation in the adrenal cortex, 25-OH-vitamin D3-24 hydroxylation in the kidney, and sterol C-27 hydroxylation in the liver. Also acts as a ferredoxin--NADP(+) reductase essential for coenzyme Q biosynthesis: together with FDX2, transfers the electrons required for the hydroxylation reaction performed by COQ6. The protein is NADPH:adrenodoxin oxidoreductase, mitochondrial (Fdxr) of Rattus norvegicus (Rat).